A 210-amino-acid polypeptide reads, in one-letter code: Outer-membrane lipoprotein carrier protein (210 aa).

The first 26 residues, 1-26, serve as a signal peptide directing secretion; the sequence is MHMIRRAAGALAVFAVAALAAAPAWA.

Belongs to the LolA family. Monomer.

It localises to the periplasm. Its function is as follows. Participates in the translocation of lipoproteins from the inner membrane to the outer membrane. Only forms a complex with a lipoprotein if the residue after the N-terminal Cys is not an aspartate (The Asp acts as a targeting signal to indicate that the lipoprotein should stay in the inner membrane). The chain is Outer-membrane lipoprotein carrier protein from Bordetella bronchiseptica (strain ATCC BAA-588 / NCTC 13252 / RB50) (Alcaligenes bronchisepticus).